The primary structure comprises 436 residues: Two-pore potassium channel 3 (436 aa).

The Cytoplasmic segment spans residues 1–148 (MANEGSDPLL…QKDPTETSRS (148 aa)). Residues 62 to 117 (SHFIDSMKQPSPSSSSTAVNNPFSDSSTLDPLLPPPPPQPEPWLSDQTSSHCQGHA) are disordered. Residues 71-92 (PSPSSSSTAVNNPFSDSSTLDP) show a composition bias toward low complexity. Residues 93–102 (LLPPPPPQPE) show a composition bias toward pro residues. Residues 149–169 (VVRQAFALLVVYLSLGVLIYW) form a helical membrane-spanning segment. An intramembrane region (pore-forming) is located at residues 185 to 204 (DGLYFCIVTMCTIGYGDITP). Residues 212–232 (FSIMFVLVGFGFIDILLSGMV) form a helical membrane-spanning segment. Topologically, residues 233–274 (SYVLDLQESYMLDSAKRRDEPEKRRSYIIDVKKGRMRIRLKV) are cytoplasmic. The chain crosses the membrane as a helical span at residues 275 to 295 (ALALGVVVLCIAVGVGIMHFI). Residues 302-321 (DSFYLSVMSVTTVGYGDRAF) constitute an intramembrane region (pore-forming). A helical transmembrane segment spans residues 328-348 (LFAAIWLLVSTLAVARAFLYL). At 349 to 436 (AEARVDKRNR…LDLLEGGSGD (88 aa)) the chain is on the cytoplasmic side. 2 EF-hand domains span residues 365-400 (LCET…EMEK) and 404-436 (KDIL…GSGD). Ca(2+) is bound by residues aspartate 378, aspartate 380, asparagine 382, cysteine 384, glutamate 389, aspartate 417, asparagine 421, lysine 423, and aspartate 428.

Belongs to the two pore domain potassium channel (TC 1.A.1.7) family. As to quaternary structure, homodimer. As to expression, expressed in roots, cotyledons, stems, hypocotyls, leaves and flowers. Detected in root tips and in mesophyll cells and guard cells of the leaves.

It localises to the vacuole membrane. The protein resides in the plastid. It is found in the chloroplast thylakoid membrane. Inhibited by barium, but not by tetraethylammonium. In terms of biological role, two-pore potassium channel modulating the proton motive force (pmf) necessary to convert photochemical energy into physiological functions. Mediates the potassium efflux from the thylakoid lumen required for the regulation of the transmembrane electrical potential, the enhancement of the pH gradient for ATP synthesis, the regulation of electron flow, and pH-mediated photoprotective responses. Requires calcium for channel activity. The chain is Two-pore potassium channel 3 from Arabidopsis thaliana (Mouse-ear cress).